Reading from the N-terminus, the 165-residue chain is 3-isopropylmalate dehydratase small subunit 2 (165 aa).

It belongs to the LeuD family. LeuD type 2 subfamily. Heterodimer of LeuC and LeuD.

It carries out the reaction (2R,3S)-3-isopropylmalate = (2S)-2-isopropylmalate. It functions in the pathway amino-acid biosynthesis; L-leucine biosynthesis; L-leucine from 3-methyl-2-oxobutanoate: step 2/4. Its function is as follows. Catalyzes the isomerization between 2-isopropylmalate and 3-isopropylmalate, via the formation of 2-isopropylmaleate. The polypeptide is 3-isopropylmalate dehydratase small subunit 2 (leuD2) (Archaeoglobus fulgidus (strain ATCC 49558 / DSM 4304 / JCM 9628 / NBRC 100126 / VC-16)).